We begin with the raw amino-acid sequence, 121 residues long: NADH-quinone oxidoreductase subunit A 2 (121 aa).

3 helical membrane passes run 6 to 26, 60 to 80, and 89 to 109; these read FLPV…TLFV, VPFF…MFLF, and IGFV…VGFA.

It belongs to the complex I subunit 3 family. NDH-1 is composed of 14 different subunits. Subunits NuoA, H, J, K, L, M, N constitute the membrane sector of the complex.

Its subcellular location is the cell inner membrane. The enzyme catalyses a quinone + NADH + 5 H(+)(in) = a quinol + NAD(+) + 4 H(+)(out). In terms of biological role, NDH-1 shuttles electrons from NADH, via FMN and iron-sulfur (Fe-S) centers, to quinones in the respiratory chain. The immediate electron acceptor for the enzyme in this species is believed to be ubiquinone. Couples the redox reaction to proton translocation (for every two electrons transferred, four hydrogen ions are translocated across the cytoplasmic membrane), and thus conserves the redox energy in a proton gradient. This chain is NADH-quinone oxidoreductase subunit A 2, found in Rhizobium meliloti (strain 1021) (Ensifer meliloti).